Reading from the N-terminus, the 125-residue chain is Large ribosomal subunit protein bL12 (125 aa).

It belongs to the bacterial ribosomal protein bL12 family. In terms of assembly, homodimer. Part of the ribosomal stalk of the 50S ribosomal subunit. Forms a multimeric L10(L12)X complex, where L10 forms an elongated spine to which 2 to 4 L12 dimers bind in a sequential fashion. Binds GTP-bound translation factors.

Functionally, forms part of the ribosomal stalk which helps the ribosome interact with GTP-bound translation factors. Is thus essential for accurate translation. This Gluconacetobacter diazotrophicus (strain ATCC 49037 / DSM 5601 / CCUG 37298 / CIP 103539 / LMG 7603 / PAl5) protein is Large ribosomal subunit protein bL12.